A 143-amino-acid polypeptide reads, in one-letter code: 3-hydroxyacyl-[acyl-carrier-protein] dehydratase FabZ (143 aa).

His-47 is a catalytic residue.

Belongs to the thioester dehydratase family. FabZ subfamily.

Its subcellular location is the cytoplasm. It catalyses the reaction a (3R)-hydroxyacyl-[ACP] = a (2E)-enoyl-[ACP] + H2O. Functionally, involved in unsaturated fatty acids biosynthesis. Catalyzes the dehydration of short chain beta-hydroxyacyl-ACPs and long chain saturated and unsaturated beta-hydroxyacyl-ACPs. This chain is 3-hydroxyacyl-[acyl-carrier-protein] dehydratase FabZ, found in Moorella thermoacetica (strain ATCC 39073 / JCM 9320).